The following is a 796-amino-acid chain: Quinoprotein glucose dehydrogenase (796 aa).

Topologically, residues 1-10 are cytoplasmic; it reads MAINNTGSRR. A helical transmembrane segment spans residues 11 to 37; that stretch reads LLVTLTALFAALCGLYLLIGGGWLVAI. Residues 38 to 40 lie on the Periplasmic side of the membrane; that stretch reads GGS. Residues 41–58 traverse the membrane as a helical segment; that stretch reads WYYPIAGLVMLGVAWMLW. At 59-62 the chain is on the cytoplasmic side; that stretch reads RSKR. Residues 63–81 traverse the membrane as a helical segment; sequence AALWLYAALLLGTMIWGVW. The Periplasmic segment spans residues 82–95; the sequence is EVGFDFWALTPRSD. Residues 96–110 traverse the membrane as a helical segment; that stretch reads ILVFFGIWLILPFVW. Residues 111–118 lie on the Cytoplasmic side of the membrane; that stretch reads RRLVIPAS. The helical transmembrane segment at 119-141 threads the bilayer; the sequence is GAVAALVVALLISGGILTWAGFN. The Periplasmic portion of the chain corresponds to 142–796; the sequence is DPQEINGTLS…VAYALPDDVK (655 aa). The active-site Proton acceptor is Asp-466.

The protein belongs to the bacterial PQQ dehydrogenase family. As to quaternary structure, monomer. The cofactor is pyrroloquinoline quinone.

It localises to the cell inner membrane. The enzyme catalyses a ubiquinone + D-glucose = D-glucono-1,5-lactone + a ubiquinol. In terms of biological role, GDH is probably involved in energy conservation rather than in sugar metabolism. The chain is Quinoprotein glucose dehydrogenase (gcd) from Escherichia coli (strain K12).